A 288-amino-acid chain; its full sequence is Damage-control phosphatase AF_1104 (288 aa).

A Subfamily I CxxC motif motif is present at residues 7-10 (CPSC). Mn(2+) contacts are provided by Asp160, Asn161, and Asp194. The Subfamily I GNFE-like motif motif lies at 247-250 (ANYE). The Subfamily I KC motif signature appears at 267 to 268 (KC).

It belongs to the damage-control phosphatase family. Nucleotides phosphatase I subfamily. It depends on [2Fe-2S] cluster as a cofactor. The cofactor is Mn(2+). Ni(2+) is required as a cofactor.

In terms of biological role, metal-dependent phosphatase with probable damage-control functions. Could hydrolyze oxidatively damaged purine nucleotides or their biosynthetic intermediates. The polypeptide is Damage-control phosphatase AF_1104 (Archaeoglobus fulgidus (strain ATCC 49558 / DSM 4304 / JCM 9628 / NBRC 100126 / VC-16)).